The following is a 609-amino-acid chain: Altered inheritance of mitochondria protein 9, mitochondrial (609 aa).

The N-terminal 24 residues, 1 to 24 (MSIIQARCIGNLTRRSIVNVMSRR), are a transit peptide targeting the mitochondrion.

This sequence belongs to the AIM9 family.

Its subcellular location is the mitochondrion. This chain is Altered inheritance of mitochondria protein 9, mitochondrial (AIM9), found in Meyerozyma guilliermondii (strain ATCC 6260 / CBS 566 / DSM 6381 / JCM 1539 / NBRC 10279 / NRRL Y-324) (Yeast).